The chain runs to 224 residues: PKHD-type hydroxylase Shewmr7_0698 (224 aa).

Residues 78 to 176 enclose the Fe2OG dioxygenase domain; it reads QFYPPLFNRY…RTAAFMWLQS (99 aa). Positions 96, 98, and 157 each coordinate Fe cation. Arginine 167 is a 2-oxoglutarate binding site.

The cofactor is Fe(2+). Requires L-ascorbate as cofactor.

This is PKHD-type hydroxylase Shewmr7_0698 from Shewanella sp. (strain MR-7).